We begin with the raw amino-acid sequence, 113 residues long: Probable 4-amino-4-deoxy-L-arabinose-phosphoundecaprenol flippase subunit ArnE (113 aa).

The next 3 helical transmembrane spans lie at 37-57 (SALK…LFWL), 62-82 (ILPL…VTLA), and 91-111 (AGIK…LMSL). Residues 45-111 (AVILLAVGML…IMLGILLMSL (67 aa)) enclose the EamA domain.

Belongs to the ArnE family. In terms of assembly, heterodimer of ArnE and ArnF.

The protein resides in the cell inner membrane. It participates in bacterial outer membrane biogenesis; lipopolysaccharide biosynthesis. Translocates 4-amino-4-deoxy-L-arabinose-phosphoundecaprenol (alpha-L-Ara4N-phosphoundecaprenol) from the cytoplasmic to the periplasmic side of the inner membrane. This is Probable 4-amino-4-deoxy-L-arabinose-phosphoundecaprenol flippase subunit ArnE from Photorhabdus laumondii subsp. laumondii (strain DSM 15139 / CIP 105565 / TT01) (Photorhabdus luminescens subsp. laumondii).